Here is a 457-residue protein sequence, read N- to C-terminus: D-inositol 3-phosphate glycosyltransferase (457 aa).

Histidine 34 is a 1D-myo-inositol 3-phosphate binding site. Residues 40–41 (QP) and glycine 48 contribute to the UDP-N-acetyl-alpha-D-glucosamine site. 1D-myo-inositol 3-phosphate is bound by residues 45–50 (DAGGMN), lysine 103, tyrosine 136, threonine 160, and arginine 180. The UDP-N-acetyl-alpha-D-glucosamine site is built by arginine 267, lysine 272, and valine 333. Positions 342, 343, and 345 each coordinate Mg(2+). UDP-N-acetyl-alpha-D-glucosamine contacts are provided by glutamate 355 and glutamate 363. Threonine 369 contributes to the Mg(2+) binding site.

The protein belongs to the glycosyltransferase group 1 family. MshA subfamily. In terms of assembly, homodimer.

The catalysed reaction is 1D-myo-inositol 3-phosphate + UDP-N-acetyl-alpha-D-glucosamine = 1D-myo-inositol 2-acetamido-2-deoxy-alpha-D-glucopyranoside 3-phosphate + UDP + H(+). In terms of biological role, catalyzes the transfer of a N-acetyl-glucosamine moiety to 1D-myo-inositol 3-phosphate to produce 1D-myo-inositol 2-acetamido-2-deoxy-glucopyranoside 3-phosphate in the mycothiol biosynthesis pathway. The polypeptide is D-inositol 3-phosphate glycosyltransferase (Streptomyces coelicolor (strain ATCC BAA-471 / A3(2) / M145)).